The following is a 4588-amino-acid chain: Protocadherin Fat 1 (4588 aa).

A signal peptide spans 1-21 (MGRHLALLLLLLLLFQHFGDS). At 22–4181 (DGSQRLEQTP…STPWNIGLAE (4160 aa)) the chain is on the extracellular side. 2 Cadherin domains span residues 35–149 (THLE…RPLF) and 150–257 (SPTS…APVI). N-linked (GlcNAc...) asparagine glycosylation occurs at Asn-40. N-linked (GlcNAc...) asparagine glycosylation is present at Asn-333. Cadherin domains follow at residues 368–463 (EKDV…PPEF), 464–569 (TQTA…TPLF), 570–673 (EKIN…VNLQ), 718–822 (STLP…PPEF), 823–927 (LQES…PPTF), 928–1034 (IPPN…PPVF), 1035–1139 (SSFV…APQT), 1140–1245 (SEPV…KPQF), 1246–1357 (LQKF…EPIS), 1359–1456 (EESF…RPQF), 1457–1562 (STSK…APWF), 1563–1667 (TASS…SPKF), 1668–1765 (TSKE…APVF), 1766–1879 (MQAE…PPVF), 1880–1979 (AKPL…HLKF), 1980–2081 (TQDV…APVF), 2082–2182 (VNLP…MPVF), 2183–2283 (EKPF…PPVF), 2284–2390 (AQQS…PPLF), 2391–2492 (EQQI…SPAF), 2493–2596 (LQNE…APQF), 2597–2703 (RATK…LPKF), 2704–2809 (SEPF…SPVF), 2810–2918 (ESSP…PPRF), 2919–3023 (TAEI…SPVC), 3024–3125 (EKTL…APEF), 3126–3230 (SADP…PPVF), 3231–3335 (EYRE…TPVF), 3336–3440 (SQDT…APVF), 3441–3545 (SRGN…PPAI), and 3546–3647 (LPLE…AIRF). N-linked (GlcNAc...) asparagine glycosylation is found at Asn-660, Asn-740, and Asn-791. N-linked (GlcNAc...) asparagine glycosylation occurs at Asn-998. 2 N-linked (GlcNAc...) asparagine glycosylation sites follow: Asn-1426 and Asn-1551. N-linked (GlcNAc...) asparagine glycosylation is found at Asn-1748, Asn-1864, Asn-1902, Asn-1940, and Asn-1991. N-linked (GlcNAc...) asparagine glycans are attached at residues Asn-2325 and Asn-2464. N-linked (GlcNAc...) asparagine glycans are attached at residues Asn-3324, Asn-3422, Asn-3444, Asn-3613, Asn-3640, and Asn-3716. An EGF-like 1 domain is found at 3790 to 3827 (VHHGCEDDPCPEGSECVSDPWEEKHTCVCPSGRFGQCP). Disulfide bonds link Cys-3794–Cys-3805, Cys-3799–Cys-3816, Cys-3818–Cys-3826, Cys-3976–Cys-4009, Cys-4017–Cys-4028, Cys-4022–Cys-4038, Cys-4040–Cys-4049, Cys-4056–Cys-4067, Cys-4061–Cys-4076, Cys-4078–Cys-4087, Cys-4093–Cys-4104, Cys-4098–Cys-4113, Cys-4115–Cys-4124, Cys-4131–Cys-4142, and Cys-4136–Cys-4151. Residues 3829 to 4009 (SSSMTLTGNS…EESVDVSPGC (181 aa)) enclose the Laminin G-like domain. 3 consecutive EGF-like domains span residues 4013–4050 (ATEDCASNPCQNGGVCNPSPAGGYYCKCSALYIGTHCE), 4052–4088 (SVNPCSSKPCLYGGTCVVDNGGFVCQCRGLYTGQRCQ), and 4089–4125 (LSPYCKDEPCKNGGTCFDSLDGAVCQCDSGFRGERCQ). Residues 4127–4163 (DIDECSGNPCLHGALCENTHGSYHCNCSHEYRGRHCE) form the EGF-like 5; calcium-binding domain. The N-linked (GlcNAc...) asparagine glycan is linked to Asn-4152. Cys-4153 and Cys-4162 are disulfide-bonded. The helical transmembrane segment at 4182–4202 (GIGIVVFVAGIFLLVVVFVLC) threads the bilayer. The Cytoplasmic segment spans residues 4203–4588 (RKMISRKKKH…PLDSQQHTEV (386 aa)). Residues 4204–4214 (KMISRKKKHQA) carry the Nuclear localization signal motif. Disordered stretches follow at residues 4255–4275 (SYTPSIPSDSRNNLDRNSFEG), 4303–4327 (SVAPNLPPPPPSNSPSDSDSIQKPS), and 4343–4376 (LSKKPLEEKPSQPYSARESLSEVQSLSSFQSESC). Residues 4256–4265 (YTPSIPSDSR) show a composition bias toward polar residues. A compositionally biased stretch (polar residues) spans 4363–4374 (SEVQSLSSFQSE). The short motif at 4378 to 4382 (DNGYH) is the PTB-like motif element. 2 disordered regions span residues 4435 to 4479 (FPPP…SSSR) and 4565 to 4588 (ESGDDGHFEEVTIPPLDSQQHTEV).

Interacts (via the C-terminus 4300-4400 AA) with ATN1. Interacts with RERE. Post-translationally, undergoes proteolytic cleavage. The extracellular domain is cleaved off and the cytoplasmic domain (about 400 AA) shuttles to the nucleus. In terms of tissue distribution, expressed in many epithelial and some endothelial and smooth muscle cells.

The protein resides in the cell membrane. Its subcellular location is the nucleus. Functionally, plays an essential role for cellular polarization, directed cell migration and modulating cell-cell contact. The sequence is that of Protocadherin Fat 1 (FAT1) from Homo sapiens (Human).